Here is a 24-residue protein sequence, read N- to C-terminus: Snake venom metalloproteinase Batx-1 (24 aa).

Residues 1–24 (YIELAVVADHGIFTKYNSNLNTIR) enclose the Peptidase M12B domain. E3 provides a ligand contact to Ca(2+).

This sequence belongs to the venom metalloproteinase (M12B) family. P-I subfamily. Monomer. The cofactor is Zn(2+). Post-translationally, the N-terminus is blocked. Contains 3 disulfide bonds. As to expression, expressed by the venom gland.

The protein localises to the secreted. With respect to regulation, inhibited by EDTA, and o-phenanthroline, but not inhibited by PMSF, pepstatin A, and aprotinin. Its function is as follows. Zinc metalloproteinase that exhits a weak hemorrhagic activity. Degrades preferentially the Aalpha- (FGA) and Bbeta-chains (FGB) of fibrinogen, and partially degrades gamma-chain (FGG) at higher concentration. Induces a mild myotoxicity, but lacks coagulant activity on human plasma or bovin fibrinogen and defibrinating activity. The polypeptide is Snake venom metalloproteinase Batx-1 (Bothrops atrox (Barba amarilla)).